The chain runs to 530 residues: MAISLGNAFIKNFLGKAPDWYKITIISFLIINPFVFFLVDPFVAGWLLVVEFIFTLAMALKCYPLQPGGLLAIEAVAIGMTSPAQVKHELVANIEVLLLLIFMVAGIYFMKQLLLYIFTKILIGIRSKVLLSLSFCLMAAFLSAFLDALTVIAVVISVTVGFYSIYHKVASGQDPSTSHDHTTDTHVREVSRDDLENYRSFLRSLLMHAGIGTALGGVMTMVGEPQNLIIADQAGWLFGEFIIRMSPVTVPVFMCGLLTCTLVEKFQICGYGTLLPENVRRILVDYDDEERKNRTNIDYAKLTAQALIAVWLIVGLAMHLAAVGLIGLTVIIFATSFTGVTEEHALGKAFEEALPFTALLAVFFSIVAVIIDQHLFTPIISWVLTLNGNAQMTMFYIANGLLSMVSDNVFVGTVYINEVKAALVNGVITRDQFDMLAVAINTGTNLPSVATPNGQAAFLFVLTSALAPLIRLSYGRMVYMALPYTIVLALVGLAGIEFMLLPMTEWFYDMGWLVHNTSEVMSTIAPAAGH.

A run of 13 helical transmembrane segments spans residues 13-33 (FLGK…IINP), 34-54 (FVFF…EFIF), 64-84 (PLQP…TSPA), 90-110 (LVAN…IYFM), 113-133 (LLLY…LLSL), 136-156 (CLMA…AVVI), 205-225 (LLMH…VGEP), 234-254 (AGWL…PVFM), 306-326 (ALIA…VGLI), 351-371 (EEAL…AVII), 378-400 (PIIS…IANG), 450-470 (ATPN…APLI), and 481-501 (ALPY…FMLL).

The protein belongs to the NhaB Na(+)/H(+) (TC 2.A.34) antiporter family.

It localises to the cell inner membrane. The catalysed reaction is 2 Na(+)(in) + 3 H(+)(out) = 2 Na(+)(out) + 3 H(+)(in). Na(+)/H(+) antiporter that extrudes sodium in exchange for external protons. This is Na(+)/H(+) antiporter NhaB from Photobacterium profundum (strain SS9).